Here is a 410-residue protein sequence, read N- to C-terminus: Neuroserpin (410 aa).

The N-terminal stretch at 1-16 (MTYLELLALLALQSVV) is a signal peptide. N-linked (GlcNAc...) asparagine glycosylation is found at Asn157, Asn321, and Asn401. Ser403 carries an O-linked (Xyl...) (chondroitin sulfate) serine glycan.

The protein belongs to the serpin family. Detected in neurons in embryonic brain cortex (at protein level). During embryonic development mostly expressed in CNS. In adult expressed in brain and much less in spinal cord, heart, kidney and testis.

Its subcellular location is the secreted. It is found in the cytoplasmic vesicle. The protein localises to the secretory vesicle lumen. The protein resides in the perikaryon. Functionally, serine protease inhibitor that inhibits plasminogen activators and plasmin but not thrombin. May be involved in the formation or reorganization of synaptic connections as well as for synaptic plasticity in the adult nervous system. May protect neurons from cell damage by tissue-type plasminogen activator. In Mus musculus (Mouse), this protein is Neuroserpin (Serpini1).